The primary structure comprises 93 residues: Small ribosomal subunit protein bS20 (93 aa).

This sequence belongs to the bacterial ribosomal protein bS20 family.

Its function is as follows. Binds directly to 16S ribosomal RNA. The protein is Small ribosomal subunit protein bS20 of Dictyoglomus thermophilum (strain ATCC 35947 / DSM 3960 / H-6-12).